Here is a 620-residue protein sequence, read N- to C-terminus: Chaperone protein DnaK (620 aa).

Thr197 carries the phosphothreonine; by autocatalysis modification. A disordered region spans residues 591 to 620; sequence AQKLGEAMANKNNAEQPKKKDDDVIDAEVE.

This sequence belongs to the heat shock protein 70 family.

Acts as a chaperone. This chain is Chaperone protein DnaK, found in Helicobacter pylori (strain HPAG1).